A 218-amino-acid polypeptide reads, in one-letter code: Uracil-DNA glycosylase (218 aa).

The active-site Proton acceptor is D68.

The protein belongs to the uracil-DNA glycosylase (UDG) superfamily. UNG family. Homodimer. Interacts with protein OPG148. Component of the Uracil-DNA glycosylase(UDG)-OPG148-polymerase complex; OPG148 and UDG form a heterodimeric processivity factor that associates with OPG71 to form the processive polymerase holoenzyme.

It catalyses the reaction Hydrolyzes single-stranded DNA or mismatched double-stranded DNA and polynucleotides, releasing free uracil.. Plays an essential role in viral replication as a component of the DNA polymerase processivity factor. Excises uracil residues from the DNA which can arise as a result of misincorporation of dUMP residues by DNA polymerase or due to deamination of cytosine. This chain is Uracil-DNA glycosylase (OPG116), found in Variola virus.